The primary structure comprises 227 residues: Isopentenyl-diphosphate Delta-isomerase 1 (227 aa).

Lys36 serves as a coordination point for substrate. Mg(2+) is bound by residues His40 and His51. A Nudix hydrolase domain is found at 49 to 199 (LLHRAFSVFL…EIKLTPWFKI (151 aa)). Arg70 and Lys74 together coordinate substrate. Cys86 is an active-site residue. Ser87 is a substrate binding site. Mg(2+) contacts are provided by Glu146 and Glu148. The active site involves Glu148. Lys176 is modified (N6-acetyllysine). The Microbody targeting signal motif lies at 225–227 (HRL).

Belongs to the IPP isomerase type 1 family. In terms of assembly, monomer. It depends on Mg(2+) as a cofactor.

The protein localises to the peroxisome. It catalyses the reaction isopentenyl diphosphate = dimethylallyl diphosphate. Its pathway is isoprenoid biosynthesis; dimethylallyl diphosphate biosynthesis; dimethylallyl diphosphate from isopentenyl diphosphate: step 1/1. Catalyzes the 1,3-allylic rearrangement of the homoallylic substrate isopentenyl (IPP) to its highly electrophilic allylic isomer, dimethylallyl diphosphate (DMAPP). In Mus musculus (Mouse), this protein is Isopentenyl-diphosphate Delta-isomerase 1 (Idi1).